The chain runs to 337 residues: Ribosomal RNA small subunit methyltransferase H (337 aa).

Residues 36–38 (GGH), Asp56, Phe82, Asp100, and Gln107 each bind S-adenosyl-L-methionine. The segment at 314 to 337 (GLERRSGRIPNPRSPIPASQGDAR) is disordered.

This sequence belongs to the methyltransferase superfamily. RsmH family.

It localises to the cytoplasm. The catalysed reaction is cytidine(1402) in 16S rRNA + S-adenosyl-L-methionine = N(4)-methylcytidine(1402) in 16S rRNA + S-adenosyl-L-homocysteine + H(+). Its function is as follows. Specifically methylates the N4 position of cytidine in position 1402 (C1402) of 16S rRNA. The sequence is that of Ribosomal RNA small subunit methyltransferase H from Xanthomonas oryzae pv. oryzae (strain PXO99A).